Here is a 657-residue protein sequence, read N- to C-terminus: Autophagy-related protein 22 (657 aa).

Over residues 1 to 15 the composition is skewed to low complexity; it reads MAPNLQPQPQSQLQR. Residues 1–78 form a disordered region; that stretch reads MAPNLQPQPQ…VVPRHFGHDA (78 aa). Over 1–91 the chain is Cytoplasmic; it reads MAPNLQPQPQ…SRRELLGWYA (91 aa). Residues 26-40 are compositionally biased toward polar residues; the sequence is GLSNISKRSFRSCAT. Residues 92-112 traverse the membrane as a helical segment; the sequence is YAFAAETYVICGIASFIPILL. The Vacuolar segment spans residues 113 to 155; that stretch reads ETLARENGVLVSDRKTPCGSSDSKNDGDGQCIVWVFGMEINTA. Residues 156 to 176 traverse the membrane as a helical segment; sequence SFAMYTFSVSVLVQALLVVSI. Topologically, residues 177–187 are cytoplasmic; sequence SCAADHGNYRK. A helical membrane pass occupies residues 188–208; it reads KLLLTFAWIGSFAVMSYIFIT. Residues 209–212 lie on the Vacuolar side of the membrane; it reads KDNY. The helical transmembrane segment at 213 to 233 threads the bilayer; it reads ILGALLTVISNTSFGASFVLL. Topologically, residues 234 to 317 are cytoplasmic; it reads NSFLPLLVRY…ELELSTRISA (84 aa). A helical membrane pass occupies residues 318-338; sequence IGIGTGYIAALFLQCICIGVL. Residues 339 to 349 lie on the Vacuolar side of the membrane; sequence ISLHNTTWGQR. Residue asparagine 343 is glycosylated (N-linked (GlcNAc...) asparagine). Residues 350-370 traverse the membrane as a helical segment; it reads VVLFMVGVWWTVFTIPAAMWL. The Cytoplasmic portion of the chain corresponds to 371–384; the sequence is RPRPGPPLADNGRK. A helical transmembrane segment spans residues 385–405; that stretch reads GIMAGLAYILYAWKSLFKTIQ. Residues 406 to 409 lie on the Vacuolar side of the membrane; sequence QARR. A helical membrane pass occupies residues 410–430; it reads LLDIVLFLAGWFLLSDAIATT. Residues 431-446 are Cytoplasmic-facing; sequence SSTAILFAKTQLHMKP. The helical transmembrane segment at 447–467 threads the bilayer; it reads WALGMINVISTTAGVFGAFGW. The Vacuolar segment spans residues 468–481; that stretch reads SWVSRLFNLKAHQT. A helical membrane pass occupies residues 482–502; sequence ILVCIALFELIPLYGLLGYLP. Over 503 to 515 the chain is Cytoplasmic; that stretch reads FVKNWGVFGLQQP. A helical transmembrane segment spans residues 516–536; sequence WEMYPLAAVYGVVLGGLSGYC. Topologically, residues 537 to 554 are vacuolar; the sequence is RSLYGELIPPGSEAAFYA. Residues 555–575 form a helical membrane-spanning segment; that stretch reads LYAITDKGSSVFGPTIVGAII. Topologically, residues 576 to 583 are cytoplasmic; it reads DRTGTIRP. A helical transmembrane segment spans residues 584 to 604; sequence AFWFLAVLVGFPAPLIWFIDV. The Vacuolar segment spans residues 605 to 657; it reads ERGRREGAKLAKSITDSIVQEEDESDDGAERRGMLSDYEREHGQSIDDERAGR. The interval 615-657 is disordered; sequence AKSITDSIVQEEDESDDGAERRGMLSDYEREHGQSIDDERAGR. The segment covering 632-657 has biased composition (basic and acidic residues); it reads GAERRGMLSDYEREHGQSIDDERAGR.

It belongs to the ATG22 family.

The protein resides in the vacuole membrane. Its function is as follows. Vacuolar effluxer which mediate the efflux of leucine and other amino acids resulting from autophagic degradation. The release of autophagic amino acids allows the maintenance of protein synthesis and viability during nitrogen starvation. Autophagy is required for proper vegetative growth, asexual/sexual reproduction, and full virulence. Autophagy is particularly involved in the biosynthesis of deoxynivalenol (DON), an important virulence determinant. In Gibberella zeae (strain ATCC MYA-4620 / CBS 123657 / FGSC 9075 / NRRL 31084 / PH-1) (Wheat head blight fungus), this protein is Autophagy-related protein 22.